The primary structure comprises 317 residues: tRNA dimethylallyltransferase (317 aa).

14–21 is a binding site for ATP; the sequence is GPTASGKS. A substrate-binding site is contributed by 16–21; sequence TASGKS. Interaction with substrate tRNA regions lie at residues 39–42 and 163–167; these read DSVL and QRIQR.

The protein belongs to the IPP transferase family. In terms of assembly, monomer. Requires Mg(2+) as cofactor.

It carries out the reaction adenosine(37) in tRNA + dimethylallyl diphosphate = N(6)-dimethylallyladenosine(37) in tRNA + diphosphate. In terms of biological role, catalyzes the transfer of a dimethylallyl group onto the adenine at position 37 in tRNAs that read codons beginning with uridine, leading to the formation of N6-(dimethylallyl)adenosine (i(6)A). This chain is tRNA dimethylallyltransferase, found in Xylella fastidiosa (strain 9a5c).